Consider the following 138-residue polypeptide: Holo-[acyl-carrier-protein] synthase (138 aa).

Residues aspartate 8 and glutamate 56 each contribute to the Mg(2+) site.

It belongs to the P-Pant transferase superfamily. AcpS family. Requires Mg(2+) as cofactor.

Its subcellular location is the cytoplasm. It catalyses the reaction apo-[ACP] + CoA = holo-[ACP] + adenosine 3',5'-bisphosphate + H(+). Its function is as follows. Transfers the 4'-phosphopantetheine moiety from coenzyme A to a Ser of acyl-carrier-protein. This is Holo-[acyl-carrier-protein] synthase from Thermoanaerobacter pseudethanolicus (strain ATCC 33223 / 39E) (Clostridium thermohydrosulfuricum).